The following is a 151-amino-acid chain: Large ribosomal subunit protein uL15 (151 aa).

Residues 1-62 form a disordered region; the sequence is MVKLNELFPK…GGQMPLYRRV (62 aa). Residues 11–20 show a composition bias toward basic residues; that stretch reads HGSRKAKRRI.

This sequence belongs to the universal ribosomal protein uL15 family. Part of the 50S ribosomal subunit.

Its function is as follows. Binds to the 23S rRNA. This Elusimicrobium minutum (strain Pei191) protein is Large ribosomal subunit protein uL15.